A 180-amino-acid chain; its full sequence is Cytokinin-beta-glucosidase 2 (180 aa).

Its function is as follows. Hydrolyzes cytokinin glucosides thus liberating free cytokinins. The polypeptide is Cytokinin-beta-glucosidase 2 (ROLC2) (Panax ginseng (Korean ginseng)).